We begin with the raw amino-acid sequence, 92 residues long: Protein AC152 (92 aa).

In terms of biological role, acts as a transactivator of AC102 and HE65 genes. Therefore, participates in the global recruitment of G-actin to the host nucleus. The protein is Protein AC152 (AC152) of Autographa californica nuclear polyhedrosis virus (AcMNPV).